The following is a 115-amino-acid chain: Large ribosomal subunit protein bL19 (115 aa).

Belongs to the bacterial ribosomal protein bL19 family.

This protein is located at the 30S-50S ribosomal subunit interface and may play a role in the structure and function of the aminoacyl-tRNA binding site. The protein is Large ribosomal subunit protein bL19 of Thermosipho melanesiensis (strain DSM 12029 / CIP 104789 / BI429).